The following is a 425-amino-acid chain: MDRNQQLFERAKHVIPGGVNSPVRAFGSVGGSPRFIKRAQGAYMWDADDRRLIDYIGSWGPMILGHAHPAVVEAVQQAAVHGLSFGTPTEAEIGIAEEICKLMPSIERVRLVSSGTEATMSAIRLARGFTGRDAIIKFEGCYHGHSDSLLVKAGSGLLTFGNPSSAGVPEDFTRHTLVLEYNNVEQLERTFAEIGERIACVILEPVAGNMNLIRPSAAFVQALRTLTQQHGSVLIYDEVMTGFRVALGGAQSLHGIQPDLTTLGKVVGGGMPIGAFGGRADIMNCIAPLGSVYQAGTLSGNPVAVAAGLATLRLIQQPGFYDALAARTARLVDGMVAAAREAGIPFSGDCVGGMFGLYFAADVPTSYAEVTASDRERFNAFFHAMLEAGVYLAPSAYEAGFVSAAHTDADIDATVDAARQAFARI.

An N6-(pyridoxal phosphate)lysine modification is found at lysine 265.

The protein belongs to the class-III pyridoxal-phosphate-dependent aminotransferase family. HemL subfamily. Homodimer. Pyridoxal 5'-phosphate serves as cofactor.

It is found in the cytoplasm. It catalyses the reaction (S)-4-amino-5-oxopentanoate = 5-aminolevulinate. Its pathway is porphyrin-containing compound metabolism; protoporphyrin-IX biosynthesis; 5-aminolevulinate from L-glutamyl-tRNA(Glu): step 2/2. This is Glutamate-1-semialdehyde 2,1-aminomutase from Laribacter hongkongensis (strain HLHK9).